The sequence spans 321 residues: MIFLFRALKPLLVLALLTVVFVLGGCSNASVLDPKGPVAEQQSDLILLSIGFMLFIVGVVFVLFTIILVKYRDRKGKDNGSYNPEIHGNTFLEVVWTVIPILIVIALSVPTVQTIYSLEKAPEATKDKEPLVVYATSVDWKWVFSYPEQDIETVNYLNIPVDRPILFKISSADSMASLWIPQLGGQKYAMAGMLMDQYLQADKVGTYEGRNANFTGEHFADQEFDVNAVTEKDFNSWVKKTQNEAPKLTKEKYDELMLPENVDELTFSSTHLKYVDHGQDAEYAMEARKRLGYQAVSPHSKTDPFENVKKNEFKKSDDTEE.

A signal peptide spans 1-25 (MIFLFRALKPLLVLALLTVVFVLGG). The N-palmitoyl cysteine moiety is linked to residue Cys26. Residue Cys26 is the site of S-diacylglycerol cysteine attachment. Transmembrane regions (helical) follow at residues 49-69 (SIGFMLFIVGVVFVLFTIILV) and 90-110 (TFLEVVWTVIPILIVIALSVP). The interval 294–321 (QAVSPHSKTDPFENVKKNEFKKSDDTEE) is disordered. A compositionally biased stretch (basic and acidic residues) spans 300-321 (SKTDPFENVKKNEFKKSDDTEE).

It belongs to the cytochrome c oxidase subunit 2 family. Interacts with FloT.

It localises to the cell membrane. It is found in the membrane raft. It catalyses the reaction 2 a quinol + O2 = 2 a quinone + 2 H2O. Functionally, catalyzes quinol oxidation with the concomitant reduction of oxygen to water. Major component for energy conversion during vegetative growth. Subunit II transfers the electrons from a quinol to the binuclear center of the catalytic subunit I. The polypeptide is Quinol oxidase subunit 2 (qoxA) (Bacillus subtilis (strain 168)).